Here is a 229-residue protein sequence, read N- to C-terminus: Urease accessory protein UreF (229 aa).

It belongs to the UreF family. As to quaternary structure, ureD, UreF and UreG form a complex that acts as a GTP-hydrolysis-dependent molecular chaperone, activating the urease apoprotein by helping to assemble the nickel containing metallocenter of UreC. The UreE protein probably delivers the nickel.

It is found in the cytoplasm. Its function is as follows. Required for maturation of urease via the functional incorporation of the urease nickel metallocenter. The sequence is that of Urease accessory protein UreF from Staphylococcus aureus (strain bovine RF122 / ET3-1).